The primary structure comprises 70 residues: MIGILLLIGICVAVTVAILYSMYNKIKNSQNPNPSPNLNSPPPEPKNTKFVNNLEKDHISSLYNLVKSSV.

A helical membrane pass occupies residues 1–21 (MIGILLLIGICVAVTVAILYS). Residues 22 to 70 (MYNKIKNSQNPNPSPNLNSPPPEPKNTKFVNNLEKDHISSLYNLVKSSV) are Virion surface-facing. The interval 30-50 (QNPNPSPNLNSPPPEPKNTKF) is disordered. Residues 33-45 (NPSPNLNSPPPEP) show a composition bias toward pro residues. At Ser40 the chain carries Phosphoserine; by host.

Belongs to the orthopoxvirus OPG139 family. Post-translationally, phosphorylated by a OPG054-independent mechanism.

The protein localises to the virion membrane. Its function is as follows. Essential for the encapsidation of DNA into immature virions (IV) and the subsequent maturation of IV into mature virions (MV). The chain is Virion membrane protein OPG139 (OPG139) from Homo sapiens (Human).